The sequence spans 290 residues: 4-hydroxy-tetrahydrodipicolinate synthase (290 aa).

A pyruvate-binding site is contributed by T44. Y132 (proton donor/acceptor) is an active-site residue. K160 functions as the Schiff-base intermediate with substrate in the catalytic mechanism. Residue I202 coordinates pyruvate.

The protein belongs to the DapA family. As to quaternary structure, homotetramer; dimer of dimers.

The protein localises to the cytoplasm. The catalysed reaction is L-aspartate 4-semialdehyde + pyruvate = (2S,4S)-4-hydroxy-2,3,4,5-tetrahydrodipicolinate + H2O + H(+). The protein operates within amino-acid biosynthesis; L-lysine biosynthesis via DAP pathway; (S)-tetrahydrodipicolinate from L-aspartate: step 3/4. In terms of biological role, catalyzes the condensation of (S)-aspartate-beta-semialdehyde [(S)-ASA] and pyruvate to 4-hydroxy-tetrahydrodipicolinate (HTPA). The protein is 4-hydroxy-tetrahydrodipicolinate synthase of Geobacter sulfurreducens (strain ATCC 51573 / DSM 12127 / PCA).